Reading from the N-terminus, the 975-residue chain is Glycine dehydrogenase (decarboxylating) (975 aa).

Position 723 is an N6-(pyridoxal phosphate)lysine (Lys-723).

This sequence belongs to the GcvP family. As to quaternary structure, the glycine cleavage system is composed of four proteins: P, T, L and H. The cofactor is pyridoxal 5'-phosphate.

It carries out the reaction N(6)-[(R)-lipoyl]-L-lysyl-[glycine-cleavage complex H protein] + glycine + H(+) = N(6)-[(R)-S(8)-aminomethyldihydrolipoyl]-L-lysyl-[glycine-cleavage complex H protein] + CO2. Its function is as follows. The glycine cleavage system catalyzes the degradation of glycine. The P protein binds the alpha-amino group of glycine through its pyridoxal phosphate cofactor; CO(2) is released and the remaining methylamine moiety is then transferred to the lipoamide cofactor of the H protein. The chain is Glycine dehydrogenase (decarboxylating) from Burkholderia multivorans (strain ATCC 17616 / 249).